The chain runs to 577 residues: General transcription factor IIF subunit 1 (577 aa).

The disordered stretch occupies residues 1–36 (MSSASKSTPSAASGSSTSAAAAAAASVASGSASSSA). A phosphoserine mark is found at serine 183, serine 246, serine 250, and serine 252. The tract at residues 236–508 (KITDMDEWID…TSLPTSFSGG (273 aa)) is disordered. Residues 240–256 (MDEWIDSEDESDSEDEE) are compositionally biased toward acidic residues. Basic and acidic residues predominate over residues 257–271 (DKKKKEQEDSDDGKA). Over residues 272–285 (KGKGKKGADKKKKK) the composition is skewed to basic residues. A compositionally biased stretch (acidic residues) spans 289-304 (DDEAFEESDDGDEEGR). A compositionally biased stretch (basic and acidic residues) spans 319-341 (PEAKVDKDMKGVAEEDALRKLLT). Threonine 341 is subject to Phosphothreonine. Serine 342, serine 352, and serine 355 each carry phosphoserine. The span at 362–376 (GEKKKKDKGKDEVSK) shows a compositional bias: basic and acidic residues. The span at 392 to 406 (SNGSGDSSTDFSSDS) shows a compositional bias: low complexity. Residues 423 to 437 (VVKDKDKEKEKEKES) are compositionally biased toward basic and acidic residues. Over residues 438 to 456 (AASSKVIASSSNANKSRSA) the composition is skewed to low complexity. Residues serine 453 and serine 455 each carry the phosphoserine modification. Threonine 457 is subject to Phosphothreonine. Composition is skewed to polar residues over residues 471 to 489 (SLPS…TSTP) and 496 to 506 (EISTSLPTSFS). Serine 482 and serine 484 each carry phosphoserine. Threonine 488 is modified (phosphothreonine).

It belongs to the TFIIF alpha subunit family. In terms of assembly, heterodimer of an alpha and a beta subunit. Phosphorylated on Ser and other residues by TAF1 and casein kinase II-like kinases.

It localises to the nucleus. TFIIF is a general transcription initiation factor that binds to RNA polymerase II and helps to recruit it to the initiation complex in collaboration with TFIIB. It promotes transcription elongation. The chain is General transcription factor IIF subunit 1 from Drosophila melanogaster (Fruit fly).